Consider the following 699-residue polypeptide: Epithelial sodium channel subunit alpha (699 aa).

The disordered stretch occupies residues 1–71; sequence MLDHTRAPEL…EPRQPTEEEE (71 aa). At 1–110 the chain is on the cytoplasmic side; it reads MLDHTRAPEL…CSKHNRMKTA (110 aa). The chain crosses the membrane as a helical span at residues 111–131; it reads FWAVLWLCTFGMMYWQFALLF. The Extracellular segment spans residues 132–589; the sequence is EEYFSYPVSL…SQWSLWFGSS (458 aa). Cystine bridges form between Cys-158–Cys-332, Cys-256–Cys-263, Cys-309–Cys-316, Cys-421–Cys-506, Cys-443–Cys-483, Cys-443–Cys-502, Cys-447–Cys-498, Cys-456–Cys-483, Cys-456–Cys-506, and Cys-458–Cys-472. Residues 200–270 form a gating release of inhibition by proteolysis (GRIP); protease-sensitive region that is responsible for the proteolytic activation of the channel region; the sequence is RRRSTRDLRG…SDCFYQTYSS (71 aa). The disordered stretch occupies residues 211–244; sequence LPHPLQRLRTPPPPNPARSARSASSSVRDNNPQV. Low complexity predominate over residues 227–238; the sequence is ARSARSASSSVR. A helical membrane pass occupies residues 590–610; it reads VLSVVEMAELIFDLLVITLIM. Residues 611 to 699 are Cytoplasmic-facing; sequence LLHRFRSRYW…SSACAPAMAL (89 aa). Residues 637–699 are disordered; that stretch reads ASSFPSRFCP…SSACAPAMAL (63 aa). A compositionally biased stretch (low complexity) spans 656 to 667; sequence PQQGTTPPLALT. The PY motif; recruits WW domain-containing proteins and is thereby required for ubiquitination and inhibition of the channel by NEDD4 and NEDD4L signature appears at 669–673; that stretch reads PPPAY.

This sequence belongs to the amiloride-sensitive sodium channel (TC 1.A.6) family. SCNN1A subfamily. Heterotrimer; containing an alpha/SCNN1A, a beta/SCNN1B and a gamma/SCNN1G subunit. Interacts with WWP1 (via WW domains). Interacts with WWP2 (via WW domains); inhibits the channel. Interacts with BPIFA1; the interaction is indirect via SCNN1B and inhibits the proteolytic processing of SCNN1A and SCNN1G and the activation of ENaC. Interacts with the full-length immature form of PCSK9 (pro-PCSK9). Post-translationally, ubiquitinated. Can be ubiquitinated at multiple sites and undergo monoubiquitination and polyubiquitination. Ubiquitination by NEDD4 or NEDD4L inhibits the ENaC channel through endocytosis, intracellular retention and degradation of its individual subunits. In terms of processing, ENaC is activated through the proteolytic maturation of its subunits. Furin cleaves the SCNN1A subunit, which results in a stepwise increase in the open probability of the channel due to the release of an inhibitory tract. BPIFA1, which is recruited by the SCNN1B subunit, prevents the proteolytic activation of ENaC. N-glycosylated. Expressed in kidney (at protein level). Expressed in lung (at protein level). Expressed in the epididymis (at protein level). In the caput and corpus regions of the epididymis, expressed uniformly on the luminal and basal surfaces of the ducts and in the sperm in the duct lumen. Also expressed in distal colon and, at low levels, in liver.

It is found in the apical cell membrane. The protein resides in the cell projection. The protein localises to the cilium. It localises to the cytoplasmic granule. Its subcellular location is the cytoplasm. It is found in the cytoplasmic vesicle. The protein resides in the secretory vesicle. The protein localises to the acrosome. It localises to the flagellum. It catalyses the reaction Na(+)(in) = Na(+)(out). With respect to regulation, originally identified and characterized by its inhibition by the diuretic drug amiloride. This is one of the three pore-forming subunits of the heterotrimeric epithelial sodium channel (ENaC), a critical regulator of sodium balance and fluid homeostasis. ENaC operates in epithelial tissues, where it mediates the electrodiffusion of sodium ions from extracellular fluid through the apical membrane of cells, with water following osmotically. It plays a key role in maintaining sodium homeostasis through electrogenic sodium reabsorption in the kidneys. Additionally, ENaC is essential for airway surface liquid homeostasis, which is crucial for proper mucus clearance. The polypeptide is Epithelial sodium channel subunit alpha (Mus musculus (Mouse)).